We begin with the raw amino-acid sequence, 91 residues long: Probable Fe(2+)-trafficking protein (91 aa).

The protein belongs to the Fe(2+)-trafficking protein family.

In terms of biological role, could be a mediator in iron transactions between iron acquisition and iron-requiring processes, such as synthesis and/or repair of Fe-S clusters in biosynthetic enzymes. This Acidobacterium capsulatum (strain ATCC 51196 / DSM 11244 / BCRC 80197 / JCM 7670 / NBRC 15755 / NCIMB 13165 / 161) protein is Probable Fe(2+)-trafficking protein.